We begin with the raw amino-acid sequence, 167 residues long: Ubiquitin-fold modifier-conjugating enzyme 1 (167 aa).

C116 serves as the catalytic Glycyl thioester intermediate. K122 participates in a covalent cross-link: Glycyl lysine isopeptide (Lys-Gly) (interchain with G-Cter in UFM1).

Belongs to the ubiquitin-conjugating enzyme family. UFC1 subfamily. In terms of assembly, interacts with UBA5 (via C-terminus). Interacts with UFL1. Interacts with UFM1. Interacts with KIRREL3. Ufmylated at Lys-122. Deufmylated by UFSP1.

E2-like enzyme which specifically catalyzes the second step in ufmylation. Accepts the ubiquitin-like modifier UFM1 from the E1 enzyme UBA5 and forms an intermediate with UFM1 via a thioester linkage. Ufmylation is involved in various processes, such as ribosome recycling, response to DNA damage, interferon response or reticulophagy (also called ER-phagy). This is Ubiquitin-fold modifier-conjugating enzyme 1 from Rattus norvegicus (Rat).